Reading from the N-terminus, the 206-residue chain is Ras-related protein ralB-A (206 aa).

Gly21–Ser28 contributes to the GTP binding site. Positions Tyr43–Tyr51 match the Effector region motif. GTP-binding positions include Asp68–Gln72 and Asn128–Asp131. A compositionally biased stretch (basic and acidic residues) spans Lys180 to Gly189. The interval Lys180–Leu206 is disordered. Positions Lys190–Lys200 are enriched in basic residues. Cys203 is subject to Cysteine methyl ester. A lipid anchor (S-geranylgeranyl cysteine) is attached at Cys203. The propeptide at Cys204 to Leu206 is removed in mature form.

Belongs to the small GTPase superfamily. Ras family. As to quaternary structure, interacts with ralbp1 and rap1gds1. As to expression, weakly expressed in adult tissues and highest levels were found in heart, brain and testes.

It is found in the cell membrane. The protein localises to the midbody. It carries out the reaction GTP + H2O = GDP + phosphate + H(+). Its function is as follows. Multifunctional GTPase involved in a variety of cellular processes including gene expression, cell migration, cell proliferation, oncogenic transformation and membrane trafficking. Accomplishes its multiple functions by interacting with distinct downstream effectors. Acts as a GTP sensor for GTP-dependent exocytosis of dense core vesicles. Required both to stabilize the assembly of the exocyst complex and to localize functional exocyst complexes to the leading edge of migrating cells. Required for suppression of apoptosis. In late stages of cytokinesis, upon completion of the bridge formation between dividing cells, mediates exocyst recruitment to the midbody to drive abscission. Regulates the actin cytoskeleton to play a role in gastrulation or neurulation. During the cleavage stages, the GTP-bound form induces a cortical reaction that affects the localization of pigment granules. Activated by the FGF pathway via ras and ral-GDS, but independently of raf. Directs ralbp1 to the plasma membrane. Involved in ligand-dependent receptor mediated endocytosis of the EGF and insulin receptors. This chain is Ras-related protein ralB-A (ralb-a), found in Xenopus laevis (African clawed frog).